The sequence spans 129 residues: MWLWQDIQCCPAPPSAPPRALEPGRAPPPPGEGLGAGIPSLSPPQKKPQSVGICVRQKGRQKAGLEKGNRKKELRQANCPSLRPQRKGADTRRLPRETRPTKKRTAAAQPFLQLWNPAPHTSNGRTGDL.

Positions 1 to 129 (MWLWQDIQCC…HTSNGRTGDL (129 aa)) are disordered. Residues 87-100 (KGADTRRLPRETRP) are compositionally biased toward basic and acidic residues. The span at 119–129 (PHTSNGRTGDL) shows a compositional bias: polar residues.

This is an uncharacterized protein from Homo sapiens (Human).